The primary structure comprises 725 residues: MKYGNMKKWAPLILFLFSLLLLQGISLHASSPSFSVNASYLASLPYANSHVAVVYYQGSLYIIGGDSHSNQVWIYSNGTWNIGPSLPFSLVSPSAIVYNNTIYVMGGYNSTGINPYVLKLNGNSWVVVSEMPLPAYSPYIFVYNNAIYVIGGENTTSPAGLYFPPSNAIRLFYPNNDSWRIIGYMPVPTYGGGYVFNGTSLIIVSGYIGYSAYTNDILIYSPQNNNWTILNGVLPYWIHDSALAYYRGVLFIVGGYIYTAGSGGVNNAILAYYNGNLQRVGYLPVPVYSAGYVQVGNMLYLAGGIGSSLSDVSALQLITFNFPPLPPKITSYSAGNESVTLGWNPVRLSSGYEIIYWNNMGFNSSINVGNVTSYTVTGLKDGITYYFEVLAYNSIGYSSPSSIIALTPASVPNPPQLVSVKYGNDNVTLNWLPPTFSGGYLLLGYYVIVKNENSMVSSHFVNSTSLTISNLTPNVTYNVFIYAVNKLGNSSPLVLTVVPITKASVFAFITKLGNGILVNWTTSFPANITLELYNPNGNLISQIAAIKGNSSYLFRVPQGNYTLVIIASNSAGVSKYVYQVVYYLPPASPQVSLIGFGNNLYISWNNEANVITYLVYVNNSLVYEGPSNSIVTNISNGTYLVKVIGVNPAGSSSPGIAVIHYTGDYVTVVKMKVVNVTIVSKIASAVSGNGNNLSLGQSIVIILLAVMILLSIAIITRNRSNGFDW.

An N-terminal signal peptide occupies residues 1–28 (MKYGNMKKWAPLILFLFSLLLLQGISLH). Kelch repeat units follow at residues 59-100 (SLYI…VYNN), 101-145 (TIYV…VYNN), 146-199 (AIYV…FNGT), 201-248 (LIIV…YYRG), 250-297 (LFIV…QVGN), and 299-342 (LYLA…VTLG). Fibronectin type-III domains follow at residues 323 to 410 (PPLP…TPAS), 411 to 504 (VPNP…TKAS), 505 to 583 (VFAF…VVYY), and 585 to 665 (PPAS…TGDY).

The protein is Kelch domain-containing protein SSO1033 of Saccharolobus solfataricus (strain ATCC 35092 / DSM 1617 / JCM 11322 / P2) (Sulfolobus solfataricus).